Here is a 193-residue protein sequence, read N- to C-terminus: dCTP deaminase (193 aa).

Residues 110–115 (RSSLAR), Asp-128, 136–138 (VLE), Tyr-171, Lys-178, and Gln-182 contribute to the dCTP site. Glu-138 acts as the Proton donor/acceptor in catalysis.

The protein belongs to the dCTP deaminase family. As to quaternary structure, homotrimer.

The enzyme catalyses dCTP + H2O + H(+) = dUTP + NH4(+). Its pathway is pyrimidine metabolism; dUMP biosynthesis; dUMP from dCTP (dUTP route): step 1/2. Catalyzes the deamination of dCTP to dUTP. This chain is dCTP deaminase, found in Buchnera aphidicola subsp. Baizongia pistaciae (strain Bp).